Consider the following 551-residue polypeptide: Probable alpha-glucosidase (551 aa).

The active-site Nucleophile is the Asp212. Glu272 serves as the catalytic Proton donor.

It belongs to the glycosyl hydrolase 13 family.

It carries out the reaction Hydrolysis of terminal, non-reducing (1-&gt;4)-linked alpha-D-glucose residues with release of alpha-D-glucose.. The sequence is that of Probable alpha-glucosidase (aglA) from Rhizobium meliloti (strain 1021) (Ensifer meliloti).